Here is a 402-residue protein sequence, read N- to C-terminus: Renin (402 aa).

Residues 1-26 (MGGRRMPLWALLLLWTSCSFSLPTDT) form the signal peptide. A propeptide spans 27–64 (ASFGRILLKKMPSVREILEERGVDMTRISAEWGEFIKK) (activation peptide). An N-linked (GlcNAc...) asparagine glycan is attached at Asn-69. The Peptidase A1 domain maps to 84–399 (YYGEIGIGTP…DRHNNRIGFA (316 aa)). Asp-102 is an active-site residue. A disulfide bridge links Cys-115 with Cys-122. The N-linked (GlcNAc...) asparagine glycan is linked to Asn-139. The cysteines at positions 278 and 282 are disulfide-linked. Asp-287 is an active-site residue. Asn-320 is a glycosylation site (N-linked (GlcNAc...) asparagine). Cys-321 and Cys-358 form a disulfide bridge.

Belongs to the peptidase A1 family. Interacts with ATP6AP2.

Its subcellular location is the secreted. It is found in the membrane. It carries out the reaction Cleavage of Leu-|-Xaa bond in angiotensinogen to generate angiotensin I.. Interaction with ATP6AP2 results in a 5-fold increased efficiency in angiotensinogen processing. Its function is as follows. Renin is a highly specific endopeptidase, whose only known function is to generate angiotensin I from angiotensinogen in the plasma, initiating a cascade of reactions that produce an elevation of blood pressure and increased sodium retention by the kidney. This is Renin (Ren1) from Rattus norvegicus (Rat).